The sequence spans 1065 residues: WD repeat-containing protein on Y chromosome (1065 aa).

WD repeat units follow at residues 153–197 (EEVT…IRTA), 326–365 (RVPL…EPSA), 369–408 (GHNG…LLQT), 459–498 (THAA…RKII), 511–550 (IIDI…VVRN), 598–638 (FHTD…RRYS), 745–784 (KTGD…VPEA), and 828–867 (AHLK…LGTL). A compositionally biased stretch (basic and acidic residues) spans 915 to 925 (PAKRAEVKAPE). Disordered stretches follow at residues 915–936 (PAKR…QTDD) and 1024–1065 (GSAL…QQSE). Residues 926–936 (DRDEETAQTDD) show a composition bias toward acidic residues.

The protein is WD repeat-containing protein on Y chromosome of Drosophila persimilis (Fruit fly).